The sequence spans 236 residues: 27 kDa hemolymph protein (236 aa).

The signal sequence occupies residues 1-17; sequence MMWKLIIVTILAVGVLC.

As to quaternary structure, monomer. In terms of tissue distribution, hemolymph.

It localises to the secreted. The sequence is that of 27 kDa hemolymph protein from Galleria mellonella (Greater wax moth).